Consider the following 449-residue polypeptide: UDP-N-acetylmuramate--L-alanine ligase (449 aa).

Residue 118–124 coordinates ATP; sequence GTHGKTT.

Belongs to the MurCDEF family.

It localises to the cytoplasm. It carries out the reaction UDP-N-acetyl-alpha-D-muramate + L-alanine + ATP = UDP-N-acetyl-alpha-D-muramoyl-L-alanine + ADP + phosphate + H(+). It functions in the pathway cell wall biogenesis; peptidoglycan biosynthesis. Its function is as follows. Cell wall formation. The protein is UDP-N-acetylmuramate--L-alanine ligase of Flavobacterium johnsoniae (strain ATCC 17061 / DSM 2064 / JCM 8514 / BCRC 14874 / CCUG 350202 / NBRC 14942 / NCIMB 11054 / UW101) (Cytophaga johnsonae).